A 151-amino-acid chain; its full sequence is Large ribosomal subunit protein bL9 (151 aa).

It belongs to the bacterial ribosomal protein bL9 family.

Its function is as follows. Binds to the 23S rRNA. This Lactobacillus helveticus (strain DPC 4571) protein is Large ribosomal subunit protein bL9.